A 131-amino-acid chain; its full sequence is Small ribosomal subunit protein uS11 (131 aa).

This sequence belongs to the universal ribosomal protein uS11 family. In terms of assembly, part of the 30S ribosomal subunit. Interacts with proteins S7 and S18. Binds to IF-3.

Located on the platform of the 30S subunit, it bridges several disparate RNA helices of the 16S rRNA. Forms part of the Shine-Dalgarno cleft in the 70S ribosome. In Exiguobacterium sibiricum (strain DSM 17290 / CCUG 55495 / CIP 109462 / JCM 13490 / 255-15), this protein is Small ribosomal subunit protein uS11.